The chain runs to 87 residues: Omega-lycotoxin-Am1b (87 aa).

Residues Met1–Cys17 form the signal peptide. A propeptide spanning residues Gln18–Arg40 is cleaved from the precursor. Cystine bridges form between Cys44-Cys59, Cys51-Cys64, Cys58-Cys84, and Cys66-Cys82.

This sequence belongs to the neurotoxin omega-lctx family. As to expression, expressed by the venom gland.

Its subcellular location is the secreted. Modulates Cav2.1/CACNA1A voltage-gated calcium channels (P/Q-type currents) in rat cerebellar Purkinje cells and hippocampal CA1-CA3 neurons. At saturating concentrations (&gt;10 nM) decelerates activation kinetics and slightly increases peak amplitude without affecting deactivation kinetics. In vivo, does not cause death when intravenously injected into mice. In rat models, through its activity on Cav2.1/CACNA1A, has an ameliorative effect on memory defects provoked by hyperstimulation of N-methyl-D-aspartate receptors (NMDARs) in the hippocampus. This chain is Omega-lycotoxin-Am1b, found in Alopecosa marikovskyi (Wolf spider).